A 127-amino-acid polypeptide reads, in one-letter code: Large ribosomal subunit protein bL12 (127 aa).

Belongs to the bacterial ribosomal protein bL12 family. In terms of assembly, homodimer. Part of the ribosomal stalk of the 50S ribosomal subunit. Forms a multimeric L10(L12)X complex, where L10 forms an elongated spine to which 2 to 4 L12 dimers bind in a sequential fashion. Binds GTP-bound translation factors.

Functionally, forms part of the ribosomal stalk which helps the ribosome interact with GTP-bound translation factors. Is thus essential for accurate translation. This Rhizobium etli (strain CIAT 652) protein is Large ribosomal subunit protein bL12.